We begin with the raw amino-acid sequence, 333 residues long: NADH dehydrogenase (ubiquinone) complex I, assembly factor 6 (333 aa).

The N-terminal 44 residues, 1–44, are a transit peptide targeting the mitochondrion; it reads MAASTLGSAWGPLRLGVPGLCRRRPPRGLWARARRLSEPVASGR.

The protein belongs to the NDUFAF6 family.

It localises to the mitochondrion inner membrane. Its function is as follows. Involved in the assembly of mitochondrial NADH:ubiquinone oxidoreductase complex (complex I) at early stages. May play a role in the biogenesis of complex I subunit MT-ND1. This Bos taurus (Bovine) protein is NADH dehydrogenase (ubiquinone) complex I, assembly factor 6 (NDUFAF6).